Reading from the N-terminus, the 155-residue chain is 6,7-dimethyl-8-ribityllumazine synthase (155 aa).

5-amino-6-(D-ribitylamino)uracil contacts are provided by residues tryptophan 18, 52–54, and 76–78; these read AFE and LVV. Arginine 84 (proton donor) is an active-site residue. Serine 109 is a binding site for 5-amino-6-(D-ribitylamino)uracil. Residue histidine 123 participates in (2S)-2-hydroxy-3-oxobutyl phosphate binding.

It belongs to the DMRL synthase family.

The catalysed reaction is (2S)-2-hydroxy-3-oxobutyl phosphate + 5-amino-6-(D-ribitylamino)uracil = 6,7-dimethyl-8-(1-D-ribityl)lumazine + phosphate + 2 H2O + H(+). Its pathway is cofactor biosynthesis; riboflavin biosynthesis; riboflavin from 2-hydroxy-3-oxobutyl phosphate and 5-amino-6-(D-ribitylamino)uracil: step 1/2. Catalyzes the formation of 6,7-dimethyl-8-ribityllumazine by condensation of 5-amino-6-(D-ribitylamino)uracil with 3,4-dihydroxy-2-butanone 4-phosphate. This is the penultimate step in the biosynthesis of riboflavin. This Rhodococcus erythropolis (Arthrobacter picolinophilus) protein is 6,7-dimethyl-8-ribityllumazine synthase.